The sequence spans 264 residues: Thymidylate synthase (264 aa).

R21 serves as a coordination point for dUMP. (6R)-5,10-methylene-5,6,7,8-tetrahydrofolate is bound at residue H51. 126–127 (RR) serves as a coordination point for dUMP. C146 functions as the Nucleophile in the catalytic mechanism. DUMP contacts are provided by residues 166 to 169 (RSCD), N177, and 207 to 209 (HLY). Position 169 (D169) interacts with (6R)-5,10-methylene-5,6,7,8-tetrahydrofolate. Residue A263 coordinates (6R)-5,10-methylene-5,6,7,8-tetrahydrofolate.

The protein belongs to the thymidylate synthase family. Bacterial-type ThyA subfamily. In terms of assembly, homodimer.

It is found in the cytoplasm. The catalysed reaction is dUMP + (6R)-5,10-methylene-5,6,7,8-tetrahydrofolate = 7,8-dihydrofolate + dTMP. It functions in the pathway pyrimidine metabolism; dTTP biosynthesis. In terms of biological role, catalyzes the reductive methylation of 2'-deoxyuridine-5'-monophosphate (dUMP) to 2'-deoxythymidine-5'-monophosphate (dTMP) while utilizing 5,10-methylenetetrahydrofolate (mTHF) as the methyl donor and reductant in the reaction, yielding dihydrofolate (DHF) as a by-product. This enzymatic reaction provides an intracellular de novo source of dTMP, an essential precursor for DNA biosynthesis. In Citrobacter koseri (strain ATCC BAA-895 / CDC 4225-83 / SGSC4696), this protein is Thymidylate synthase.